The sequence spans 327 residues: Flotillin-like protein FloA (327 aa).

Residues 7 to 27 (FLVPILIVILLLVFFSLVPVG) form a helical membrane-spanning segment.

It belongs to the flotillin-like FloA family. Homooligomerizes.

It localises to the cell membrane. Its subcellular location is the membrane raft. In terms of biological role, found in functional membrane microdomains (FMM) that may be equivalent to eukaryotic membrane rafts. FMMs are highly dynamic and increase in number as cells age. Flotillins are thought to be important factors in membrane fluidity. The protein is Flotillin-like protein FloA of Finegoldia magna (strain ATCC 29328 / DSM 20472 / WAL 2508) (Peptostreptococcus magnus).